The following is a 513-amino-acid chain: ATP synthase subunit alpha (513 aa).

Residue Gly-169–Thr-176 participates in ATP binding.

It belongs to the ATPase alpha/beta chains family. In terms of assembly, F-type ATPases have 2 components, CF(1) - the catalytic core - and CF(0) - the membrane proton channel. CF(1) has five subunits: alpha(3), beta(3), gamma(1), delta(1), epsilon(1). CF(0) has three main subunits: a(1), b(2) and c(9-12). The alpha and beta chains form an alternating ring which encloses part of the gamma chain. CF(1) is attached to CF(0) by a central stalk formed by the gamma and epsilon chains, while a peripheral stalk is formed by the delta and b chains.

It localises to the cell inner membrane. The catalysed reaction is ATP + H2O + 4 H(+)(in) = ADP + phosphate + 5 H(+)(out). Its function is as follows. Produces ATP from ADP in the presence of a proton gradient across the membrane. The alpha chain is a regulatory subunit. This Actinobacillus succinogenes (strain ATCC 55618 / DSM 22257 / CCUG 43843 / 130Z) protein is ATP synthase subunit alpha.